The primary structure comprises 109 residues: Putative glutaredoxin-C11 (109 aa).

The region spanning 2–108 (AEMVARLASE…PLLKSAGALW (107 aa)) is the Glutaredoxin domain. Residues C22 and C25 are joined by a disulfide bond. The short motif at 106–109 (ALWL) is the Responsive for interaction with TGA factors element.

It belongs to the glutaredoxin family. CC-type subfamily.

Its subcellular location is the cytoplasm. It is found in the nucleus. Its function is as follows. Has a glutathione-disulfide oxidoreductase activity in the presence of NADPH and glutathione reductase. Reduces low molecular weight disulfides and proteins. The polypeptide is Putative glutaredoxin-C11 (GRXC11) (Oryza sativa subsp. japonica (Rice)).